The sequence spans 649 residues: Centrosomal protein of 63 kDa-A (649 aa).

Coiled coils occupy residues 19 to 185 and 222 to 556; these read DSCE…YQHQ and EEEL…DAAS. Ser560 is modified (phosphoserine; by atm and atr). The stretch at 612 to 645 forms a coiled coil; the sequence is FLQEEEQRSHELLQRLNAHIEELKQESQRTVEHF.

This sequence belongs to the CEP63 family. Phosphorylation at Ser-560 by atm and atr promotes its delocalization from the centrosome and impairs its ability to promote centrosome dependent spindle assembly.

It is found in the cytoplasm. The protein resides in the cytoskeleton. It localises to the microtubule organizing center. The protein localises to the centrosome. Its subcellular location is the centriole. Its function is as follows. Required for normal spindle assembly. Plays a key role in mother-centriole-dependent centriole duplication. Plays a role in DNA damage response. Following DNA damage, such as double-strand breaks (DSBs), is removed from centrosomes; this leads to the inactivation of spindle assembly and delay in mitotic progression. This is Centrosomal protein of 63 kDa-A (cep63-a) from Xenopus laevis (African clawed frog).